The following is a 343-amino-acid chain: Transcription factor MYB83 (343 aa).

The span at 1–16 (MMMRKPDITTIRDKGK) shows a compositional bias: basic and acidic residues. The interval 1 to 33 (MMMRKPDITTIRDKGKPNHACGGNNNKPKLRKG) is disordered. HTH myb-type domains follow at residues 27–79 (KPKL…INYL) and 80–134 (RPDL…KKRL). 2 consecutive DNA-binding regions (H-T-H motif) follow at residues 55–79 (WSDIARNAGLLRCGKSCRLRWINYL) and 107–130 (WSQIATRLPGRTDNEIKNFWNSTL). Positions 134 to 172 (LKNNSNNNTSSGSSPNNSNSNSLDPRDQHVDMGGNSTSL) are disordered. The segment covering 136–155 (NNSNNNTSSGSSPNNSNSNS) has biased composition (low complexity).

Expressed specifically in fiber and vessel cells that are undergoing secondary wall thickening in floral stems. Expressed in vessels but not in xylary fibers in the developing secondary xylem of roots.

Its subcellular location is the nucleus. In terms of biological role, transcription factor that acts as a molecular switch in the NAC012/SND1-mediated transcriptional network regulating secondary wall biosynthesis. Is directly activated by NAC012/SND1 and its close homologs, including NAC043/NST1, NAC066/NST2, NAC101/VND6 and NAC030/VND7. Is required for functional expression of a number of secondary wall-associated transcription factors and secondary wall biosynthetic genes involved in cellulose, xylan and lignin synthesis. Functions redundantly with MYB46 in the transcriptional regulatory cascade leading to secondary wall formation in fibers and vessels. Transcription activator that binds to the DNA consensus sequence 5'-ACC[AT]A[AC][TC]-3', designated as the secondary wall MYB-responsive element (SMRE). Regulates directly numerous transcription factors and a number of genes involved in secondary wall biosynthesis that contain SMRE elements in their promoters. The chain is Transcription factor MYB83 from Arabidopsis thaliana (Mouse-ear cress).